The chain runs to 283 residues: NAD kinase (283 aa).

Asp73 acts as the Proton acceptor in catalysis. NAD(+) contacts are provided by residues 73–74 (DG), 146–147 (NE), His157, His176, Asp178, 189–194 (TAYNLS), and Ala213.

This sequence belongs to the NAD kinase family. A divalent metal cation serves as cofactor.

The protein localises to the cytoplasm. The enzyme catalyses NAD(+) + ATP = ADP + NADP(+) + H(+). Involved in the regulation of the intracellular balance of NAD and NADP, and is a key enzyme in the biosynthesis of NADP. Catalyzes specifically the phosphorylation on 2'-hydroxyl of the adenosine moiety of NAD to yield NADP. This chain is NAD kinase, found in Haloarcula marismortui (strain ATCC 43049 / DSM 3752 / JCM 8966 / VKM B-1809) (Halobacterium marismortui).